A 243-amino-acid chain; its full sequence is Protein IN2-1 homolog A (243 aa).

The 82-residue stretch at 31–112 folds into the GST N-terminal domain; it reads GTTRLYICYF…YIDSHFEGPA (82 aa). Glutathione contacts are provided by residues K70, V84, and 96–97; that span reads ES. The GST C-terminal domain maps to 117–240; that stretch reads DPEKRQFADE…YLLDLAKTHL (124 aa).

The protein belongs to the GST superfamily. HSP26 family.

The polypeptide is Protein IN2-1 homolog A (Oryza sativa subsp. japonica (Rice)).